The primary structure comprises 54 residues: Small ribosomal subunit protein uS14 (54 aa).

Positions 19, 22, 37, and 40 each coordinate Zn(2+).

Belongs to the universal ribosomal protein uS14 family. Zinc-binding uS14 subfamily. In terms of assembly, part of the 30S ribosomal subunit. The cofactor is Zn(2+).

Binds 16S rRNA, required for the assembly of 30S particles. The protein is Small ribosomal subunit protein uS14 of Sulfurisphaera tokodaii (strain DSM 16993 / JCM 10545 / NBRC 100140 / 7) (Sulfolobus tokodaii).